Here is a 527-residue protein sequence, read N- to C-terminus: CTP synthase (527 aa).

The segment at 1 to 270 (MKYIFVTGGV…ADVLCQLLQL (270 aa)) is amidoligase domain. Position 12 (S12) interacts with CTP. S12 is a binding site for UTP. ATP contacts are provided by residues 13–18 (GLGKGI) and D70. Residues D70 and E145 each coordinate Mg(2+). Residues 152 to 154 (DIE), 191 to 196 (KTKPTQ), and K227 contribute to the CTP site. Residues 191–196 (KTKPTQ) and K227 contribute to the UTP site. A Glutamine amidotransferase type-1 domain is found at 292–525 (TIGIVSKYGK…VEACLKNRGK (234 aa)). An L-glutamine-binding site is contributed by G349. Catalysis depends on C376, which acts as the Nucleophile; for glutamine hydrolysis. L-glutamine-binding positions include 377 to 380 (LGFQ), E400, and R455. Residues H498 and E500 contribute to the active site.

Belongs to the CTP synthase family. In terms of assembly, homotetramer.

It carries out the reaction UTP + L-glutamine + ATP + H2O = CTP + L-glutamate + ADP + phosphate + 2 H(+). The enzyme catalyses L-glutamine + H2O = L-glutamate + NH4(+). It catalyses the reaction UTP + NH4(+) + ATP = CTP + ADP + phosphate + 2 H(+). The protein operates within pyrimidine metabolism; CTP biosynthesis via de novo pathway; CTP from UDP: step 2/2. With respect to regulation, allosterically activated by GTP, when glutamine is the substrate; GTP has no effect on the reaction when ammonia is the substrate. The allosteric effector GTP functions by stabilizing the protein conformation that binds the tetrahedral intermediate(s) formed during glutamine hydrolysis. Inhibited by the product CTP, via allosteric rather than competitive inhibition. Functionally, catalyzes the ATP-dependent amination of UTP to CTP with either L-glutamine or ammonia as the source of nitrogen. Regulates intracellular CTP levels through interactions with the four ribonucleotide triphosphates. This is CTP synthase from Methanospirillum hungatei JF-1 (strain ATCC 27890 / DSM 864 / NBRC 100397 / JF-1).